The following is a 279-amino-acid chain: 2-dehydro-3-deoxyphosphooctonate aldolase (279 aa).

Belongs to the KdsA family.

The protein localises to the cytoplasm. It catalyses the reaction D-arabinose 5-phosphate + phosphoenolpyruvate + H2O = 3-deoxy-alpha-D-manno-2-octulosonate-8-phosphate + phosphate. It functions in the pathway carbohydrate biosynthesis; 3-deoxy-D-manno-octulosonate biosynthesis; 3-deoxy-D-manno-octulosonate from D-ribulose 5-phosphate: step 2/3. The protein operates within bacterial outer membrane biogenesis; lipopolysaccharide biosynthesis. This chain is 2-dehydro-3-deoxyphosphooctonate aldolase, found in Bartonella henselae (strain ATCC 49882 / DSM 28221 / CCUG 30454 / Houston 1) (Rochalimaea henselae).